The following is a 131-amino-acid chain: Large ribosomal subunit protein bL17 (131 aa).

It belongs to the bacterial ribosomal protein bL17 family. In terms of assembly, part of the 50S ribosomal subunit. Contacts protein L32.

The protein is Large ribosomal subunit protein bL17 of Shewanella baltica (strain OS223).